The sequence spans 442 residues: Phosphoglucosamine mutase (442 aa).

Ser-103 acts as the Phosphoserine intermediate in catalysis. The Mg(2+) site is built by Ser-103, Asp-241, Asp-243, and Asp-245. Phosphoserine is present on Ser-103.

It belongs to the phosphohexose mutase family. Mg(2+) is required as a cofactor. Post-translationally, activated by phosphorylation.

The catalysed reaction is alpha-D-glucosamine 1-phosphate = D-glucosamine 6-phosphate. Functionally, catalyzes the conversion of glucosamine-6-phosphate to glucosamine-1-phosphate. The polypeptide is Phosphoglucosamine mutase (Deinococcus deserti (strain DSM 17065 / CIP 109153 / LMG 22923 / VCD115)).